Here is a 294-residue protein sequence, read N- to C-terminus: Probable 2-(5''-triphosphoribosyl)-3'-dephosphocoenzyme-A synthase (294 aa).

This sequence belongs to the CitG/MdcB family.

It catalyses the reaction 3'-dephospho-CoA + ATP = 2'-(5''-triphospho-alpha-D-ribosyl)-3'-dephospho-CoA + adenine. The sequence is that of Probable 2-(5''-triphosphoribosyl)-3'-dephosphocoenzyme-A synthase from Streptococcus equi subsp. equi (strain 4047).